Reading from the N-terminus, the 1306-residue chain is Disease resistance protein Roq1 (1306 aa).

A TIR domain is found at 10–179; sequence RSYDVFLSFR…QILKDIFDKF (170 aa). NAD(+) contacts are provided by residues 19 to 24 and Gly-52; that span reads RGEDTR. The active site involves Glu-86. The region spanning 198 to 417 is the NB-ARC domain; that stretch reads KKLSSLLRMD…IDRLKDNPEG (220 aa). LRR repeat units follow at residues 200-224, 252-275, 417-440, 599-622, 645-669, 670-693, 716-739, 741-763, 784-807, 808-831, 832-857, 878-902, 904-926, 927-949, 961-983, 987-1010, 1013-1036, and 1045-1070; these read LSSL…GVGK, LQHH…EFVD, GEIM…IFLD, PSKL…AKRL, ITNL…VGFL, KNLI…IQSE, MTHL…IEHL, SLEN…IWRF, SNCT…IGNL, TSLN…IWGL, TSLT…AINH, LDLL…IWML, FLRI…LGHL, EHLE…VARL, FAIG…VFGS, LGSV…MNQL, LEYL…SIKE, and LRIM…EYQN.

This sequence belongs to the disease resistance TIR-NB-LRR family. In terms of assembly, homodimer.

The enzyme catalyses NAD(+) + H2O = ADP-D-ribose + nicotinamide + H(+). It catalyses the reaction NAD(+) = 2'cADPR + nicotinamide + H(+). Functionally, disease resistance (R) protein that specifically recognizes the Xanthomonas and Pseudomonas effector proteins XopQ and HopQ1, and triggers cell death. An NAD(+) hydrolase (NADase): in response to activation, catalyzes cleavage of NAD(+) into ADP-D-ribose (ADPR) and nicotinamide; NAD(+) cleavage triggers a defense system that promotes cell death. Makes small amounts of 2' cyclic ADPR (2'cADPR). The polypeptide is Disease resistance protein Roq1 (Nicotiana benthamiana).